A 97-amino-acid polypeptide reads, in one-letter code: Eotaxin (97 aa).

A signal peptide spans 1–23 (MQLSTALLFLLLTATSFTSQVLA). 2 disulfide bridges follow: C32-C57 and C33-C73. A glycan (O-linked (GalNAc...) threonine) is linked at T94.

It belongs to the intercrine beta (chemokine CC) family.

It is found in the secreted. In terms of biological role, in response to the presence of allergens, this protein directly promotes the accumulation of eosinophils (a prominent feature of allergic inflammatory reactions), but not lymphocytes, macrophages or neutrophils. Binds to CCR3. The polypeptide is Eotaxin (Ccl11) (Rattus norvegicus (Rat)).